Consider the following 215-residue polypeptide: Uridine kinase (215 aa).

ATP is bound at residue 16–23 (GASASGKS).

It belongs to the uridine kinase family.

The protein resides in the cytoplasm. The enzyme catalyses uridine + ATP = UMP + ADP + H(+). It carries out the reaction cytidine + ATP = CMP + ADP + H(+). The protein operates within pyrimidine metabolism; CTP biosynthesis via salvage pathway; CTP from cytidine: step 1/3. It participates in pyrimidine metabolism; UMP biosynthesis via salvage pathway; UMP from uridine: step 1/1. The protein is Uridine kinase of Aliivibrio salmonicida (strain LFI1238) (Vibrio salmonicida (strain LFI1238)).